The sequence spans 350 residues: Bifunctional UDP-glucose 4-epimerase and UDP-xylose 4-epimerase 1 (350 aa).

NAD(+)-binding positions include 15 to 17 (GFI), 36 to 40 (DNFDN), 67 to 68 (DL), Phe-89, and Lys-93. Residue Ser-133 coordinates substrate. The active-site Proton acceptor is the Tyr-157. Positions 161 and 185 each coordinate NAD(+).

It belongs to the NAD(P)-dependent epimerase/dehydratase family. NAD(+) is required as a cofactor.

It catalyses the reaction UDP-alpha-D-glucose = UDP-alpha-D-galactose. It carries out the reaction UDP-beta-L-arabinopyranose = UDP-alpha-D-xylose. It functions in the pathway carbohydrate metabolism; galactose metabolism. Its pathway is nucleotide-sugar biosynthesis; UDP-L-arabinose biosynthesis; UDP-L-arabinose from UDP-alpha-D-xylose: step 1/1. It participates in cell wall biogenesis; cell wall polysaccharide biosynthesis. Inhibited by Hg(2+). Catalyzes the interconversion between UDP-glucose and UDP-galactose and the interconversion between UDP-arabinose and UDP-xylose. The protein is Bifunctional UDP-glucose 4-epimerase and UDP-xylose 4-epimerase 1 of Pisum sativum (Garden pea).